Reading from the N-terminus, the 514-residue chain is MGLPWYRVHTAVINDPGRLLAVHLMHTALVLGWAGSMALYELAVFDPSDAVLNPMWRQGMFVLPFMTRLGVTHSWSGWTVTGEPWINEPGFLNAHFNFWSYEGVALMHIVLSGLFFLAAVWHWVYWDLDLFEDPRTGEPALDLPKIFGGHLFLLGFLCFNFGTFHLTGIFGPGMWVSDAYGLTGHIEHIAPEWGPAGFNPFNPGGVVAHHIAAGITLMIGGVFHLTARPPERLYTALRMGNVETALASAIAAVFGAAFVVAGTMWYGHVTTPIELFGPTRYQWDQGYFTQEIQRRVDSQLAEGASLSEAWSSIPEKLAFYDYVGNSPAKGGLFRVGAMDSGDGIAEEWLGHPVFQDGAGRALSVRRLPNFFENFPVILTDGDGVVRADIPFRRSESQYSFEQTGVTVSFYGGALDGQTFTNPSDVKKFARRAQLGEAFDFDTETLGSDGVFRTSTRGWFTFGHACFALLFFFGHIWHGARTLFRDVFAGIDADLGEQIEFGAFQKLGDLTTRKS.

6 consecutive transmembrane segments (helical) span residues 21–36, 109–123, 148–164, 211–226, 245–260, and 465–480; these read AVHL…WAGS, IVLS…VWHW, GGHL…FGTF, IAAG…FHLT, ALAS…AFVV, and CFAL…HGAR.

It belongs to the PsbB/PsbC family. PsbB subfamily. PSII is composed of 1 copy each of membrane proteins PsbA, PsbB, PsbC, PsbD, PsbE, PsbF, PsbH, PsbI, PsbJ, PsbK, PsbL, PsbM, PsbT, PsbX, PsbY, PsbZ, Psb30/Ycf12, peripheral proteins PsbO, CyanoQ (PsbQ), PsbU, PsbV and a large number of cofactors. It forms dimeric complexes. The cofactor is Binds multiple chlorophylls. PSII binds additional chlorophylls, carotenoids and specific lipids..

The protein resides in the cellular thylakoid membrane. In terms of biological role, one of the components of the core complex of photosystem II (PSII). It binds chlorophyll and helps catalyze the primary light-induced photochemical processes of PSII. PSII is a light-driven water:plastoquinone oxidoreductase, using light energy to abstract electrons from H(2)O, generating O(2) and a proton gradient subsequently used for ATP formation. The chain is Photosystem II CP47 reaction center protein from Prochlorothrix hollandica.